We begin with the raw amino-acid sequence, 306 residues long: Nod factor export ATP-binding protein I (306 aa).

The 231-residue stretch at 8–238 folds into the ABC transporter domain; that stretch reads IDLVGVRKSF…HIGCNVIEIY (231 aa). 40–47 serves as a coordination point for ATP; it reads GPNGAGKS.

This sequence belongs to the ABC transporter superfamily. Lipooligosaccharide exporter (TC 3.A.1.102) family. In terms of assembly, the complex is composed of two ATP-binding proteins (NodI) and two transmembrane proteins (NodJ).

The protein resides in the cell inner membrane. In terms of biological role, part of the ABC transporter complex NodIJ involved in the export of the nodulation factors (Nod factors), the bacterial signal molecules that induce symbiosis and subsequent nodulation induction. Nod factors are LCO (lipo-chitin oligosaccharide), a modified beta-1,4-linked N-acetylglucosamine oligosaccharide. This subunit is responsible for energy coupling to the transport system. The protein is Nod factor export ATP-binding protein I of Bradyrhizobium diazoefficiens (strain JCM 10833 / BCRC 13528 / IAM 13628 / NBRC 14792 / USDA 110).